The chain runs to 131 residues: Flagellar assembly factor FliW (131 aa).

The protein belongs to the FliW family. In terms of assembly, interacts with translational regulator CsrA and flagellin(s).

It localises to the cytoplasm. In terms of biological role, acts as an anti-CsrA protein, binds CsrA and prevents it from repressing translation of its target genes, one of which is flagellin. Binds to flagellin and participates in the assembly of the flagellum. This is Flagellar assembly factor FliW from Campylobacter lari (strain RM2100 / D67 / ATCC BAA-1060).